We begin with the raw amino-acid sequence, 216 residues long: Probable transaldolase (216 aa).

Catalysis depends on Lys-83, which acts as the Schiff-base intermediate with substrate.

The protein belongs to the transaldolase family. Type 3B subfamily.

It localises to the cytoplasm. It catalyses the reaction D-sedoheptulose 7-phosphate + D-glyceraldehyde 3-phosphate = D-erythrose 4-phosphate + beta-D-fructose 6-phosphate. The protein operates within carbohydrate degradation; pentose phosphate pathway; D-glyceraldehyde 3-phosphate and beta-D-fructose 6-phosphate from D-ribose 5-phosphate and D-xylulose 5-phosphate (non-oxidative stage): step 2/3. Its function is as follows. Transaldolase is important for the balance of metabolites in the pentose-phosphate pathway. The polypeptide is Probable transaldolase (Caldanaerobacter subterraneus subsp. tengcongensis (strain DSM 15242 / JCM 11007 / NBRC 100824 / MB4) (Thermoanaerobacter tengcongensis)).